The sequence spans 586 residues: uncharacterized protein (586 aa).

Disordered regions lie at residues 17–64 (VRRT…ETEE) and 80–123 (HSCS…GGAN). A compositionally biased stretch (polar residues) spans 28–37 (PSTSGSIAWT). 2 stretches are compositionally biased toward low complexity: residues 38 to 52 (SSESGSAHSSRVSSS) and 80 to 91 (HSCSAATTSQQS). The segment covering 94-110 (QSKEHRIGGIKKEEKPI) has biased composition (basic and acidic residues). A compositionally biased stretch (gly residues) spans 112–123 (MGGGSSENGGAN). The next 12 membrane-spanning stretches (helical) occupy residues 151–171 (WVILVIFMFLSGSNGAQWIQY), 191–211 (WTSMIYMLTYILFFIPAAWLL), 218–238 (LSVLLGALGNCVGAWIKLLST), 243–263 (FWVTFVGQTIVGASQMFTLGI), 283–303 (LGVFGNQLGIAVGFVLPPLIV), 317–337 (TLFLGSAVLNTSILALVICFF), 375–395 (FVILFITYGINTGVFYAISTL), 413–433 (YVGLLIVVAGMAGSVVGGFIL), 441–461 (LTTIMIYLFSFVGMLSFTLTI), 466–486 (MVLVFINAALLGFFMTGYLPI), 513–533 (IFGIALTWLMGIVMHGFGTFT), and 536–556 (IIMSSCLVVGTILTCFIREDL).

It belongs to the major facilitator superfamily. Feline leukemia virus subgroup C receptor (TC 2.A.1.28.1) family.

It is found in the membrane. This is an uncharacterized protein from Caenorhabditis elegans.